Consider the following 154-residue polypeptide: uncharacterized protein (154 aa).

A divalent metal cation-binding residues include His-47, His-127, and His-131. Tyr-150 is subject to Phosphotyrosine.

The protein belongs to the DinB family. In terms of assembly, homodimer.

This is an uncharacterized protein from Bacillus subtilis (strain 168).